The chain runs to 88 residues: Small ribosomal subunit protein bS20 (88 aa).

Residues 1-10 (MANHKSSLKR) show a composition bias toward basic residues. The segment at 1–24 (MANHKSSLKRAKQDIVRNTRNKSR) is disordered.

This sequence belongs to the bacterial ribosomal protein bS20 family.

Its function is as follows. Binds directly to 16S ribosomal RNA. The sequence is that of Small ribosomal subunit protein bS20 from Desulfosudis oleivorans (strain DSM 6200 / JCM 39069 / Hxd3) (Desulfococcus oleovorans).